The primary structure comprises 367 residues: Phospho-N-acetylmuramoyl-pentapeptide-transferase (367 aa).

A run of 10 helical transmembrane segments spans residues 27–47 (VLAA…VIRW), 73–93 (TMGG…WGDL), 97–117 (YVWT…YDDW), 132–152 (WKFF…AFSA), 167–187 (TMAY…VIVG), 200–220 (GLAI…AYVT), 237–257 (AGEL…FLWF), 264–284 (VFMG…VAVI), 289–309 (IVLL…MLQV), and 344–364 (QVVV…LSTL).

The protein belongs to the glycosyltransferase 4 family. MraY subfamily. Requires Mg(2+) as cofactor.

Its subcellular location is the cell inner membrane. It catalyses the reaction UDP-N-acetyl-alpha-D-muramoyl-L-alanyl-gamma-D-glutamyl-meso-2,6-diaminopimeloyl-D-alanyl-D-alanine + di-trans,octa-cis-undecaprenyl phosphate = di-trans,octa-cis-undecaprenyl diphospho-N-acetyl-alpha-D-muramoyl-L-alanyl-D-glutamyl-meso-2,6-diaminopimeloyl-D-alanyl-D-alanine + UMP. Its pathway is cell wall biogenesis; peptidoglycan biosynthesis. Functionally, catalyzes the initial step of the lipid cycle reactions in the biosynthesis of the cell wall peptidoglycan: transfers peptidoglycan precursor phospho-MurNAc-pentapeptide from UDP-MurNAc-pentapeptide onto the lipid carrier undecaprenyl phosphate, yielding undecaprenyl-pyrophosphoryl-MurNAc-pentapeptide, known as lipid I. The protein is Phospho-N-acetylmuramoyl-pentapeptide-transferase of Dechloromonas aromatica (strain RCB).